Here is a 546-residue protein sequence, read N- to C-terminus: NRAMP-like transporter smf-2 (546 aa).

At 1–42 (MPGFQNANISDLAPPAREKTFDDTIAVKIPEDEKNTWFSWRK) the chain is on the cytoplasmic side. A helical membrane pass occupies residues 43-63 (LWAFTGPGFLMSIAYLDPGNI). Over 64 to 70 (ESDLQAG) the chain is Extracellular. A helical transmembrane segment spans residues 71-91 (AQAEYKLLWVLLVSHIVGMLL). Residues 92 to 119 (QRMSARLGVVSGKHMAEIAYDYYPLVPR) lie on the Cytoplasmic side of the membrane. A helical membrane pass occupies residues 120–140 (IILWLMIEIAIVCSDMQEVIG). The Extracellular portion of the chain corresponds to 141-152 (TAIAIYLLSSGK). The helical transmembrane segment at 153–173 (IPLLVGVLITILDTFTFLFID) threads the bilayer. Residues 174-181 (RYGIRKLE) are Cytoplasmic-facing. A helical membrane pass occupies residues 182–202 (FIFVALISTMAISFGYEFVVM). Topologically, residues 203-228 (KPVLTKVLTGTVVPWCSGCGKEEIIT) are extracellular. Residues 229–249 (AISIFGAVIMPHNFYLHSALV) traverse the membrane as a helical segment. Residues 250-270 (KSRKVDRSSKTRIAEANKYFS) lie on the Cytoplasmic side of the membrane. The chain crosses the membrane as a helical span at residues 271–291 (IESAFALSVSFFINLFVLSVF). The Extracellular segment spans residues 292–334 (ARGLYQKTNGDVNSMCLSHNDIPDSNVFPNNTSSVTVDLFQGG). Asn-321 carries an N-linked (GlcNAc...) asparagine glycan. A helical transmembrane segment spans residues 335-355 (IYLGCQFGLFAMIIWAIGIFA). Topologically, residues 356 to 386 (AGQSSTMTGTYTGQFVMEGFVRISWPKWKRV) are cytoplasmic. A helical membrane pass occupies residues 387 to 407 (LITRAVAITPTLILCIKAHGI). Topologically, residues 408–415 (KNLTGMND) are extracellular. An N-linked (GlcNAc...) asparagine glycan is attached at Asn-409. A helical transmembrane segment spans residues 416–436 (FLNCVQMVQLPFALIPMITFT). The Cytoplasmic segment spans residues 437–453 (SSKRIMHNFRTSKPLQY). The helical transmembrane segment at 454-474 (FSIICGIITIGINVYFIFQYV) threads the bilayer. The Extracellular segment spans residues 475 to 483 (TENFGTGWL). The helical transmembrane segment at 484 to 504 (IFVIIGPFTLLYIAFILYLAI) threads the bilayer. The Cytoplasmic segment spans residues 505–546 (YCLVACELMNDTVNLPGFDFHRTLELDAPWITETFVVNDVYF).

Belongs to the NRAMP family. Expressed in dopaminergic neurons (at protein level). Primarily expressed in mc1, mc2 and mc3 epithelial cells of the pharynx and vpil-6 pharyngeal-intestinal valve cells displaying an anterior-posterior expression gradient. Expressed in gonad sheath cells.

The protein localises to the apical cell membrane. It localises to the cytoplasmic vesicle membrane. Its function is as follows. Probable divalent metal ion transporter which regulates Mn(2+) uptake. This Caenorhabditis elegans protein is NRAMP-like transporter smf-2.